The sequence spans 360 residues: Phenylalanine--tRNA ligase alpha subunit (360 aa).

Glu260 lines the Mg(2+) pocket.

Belongs to the class-II aminoacyl-tRNA synthetase family. Phe-tRNA synthetase alpha subunit type 1 subfamily. As to quaternary structure, tetramer of two alpha and two beta subunits. It depends on Mg(2+) as a cofactor.

The protein localises to the cytoplasm. The enzyme catalyses tRNA(Phe) + L-phenylalanine + ATP = L-phenylalanyl-tRNA(Phe) + AMP + diphosphate + H(+). In Methylobacterium radiotolerans (strain ATCC 27329 / DSM 1819 / JCM 2831 / NBRC 15690 / NCIMB 10815 / 0-1), this protein is Phenylalanine--tRNA ligase alpha subunit.